The sequence spans 157 residues: 2-C-methyl-D-erythritol 2,4-cyclodiphosphate synthase (157 aa).

Residues Asp-8 and His-10 each coordinate a divalent metal cation. 4-CDP-2-C-methyl-D-erythritol 2-phosphate contacts are provided by residues 8 to 10 and 35 to 36; these read DIH and HS. His-43 is an a divalent metal cation binding site. Residues 57 to 59, 62 to 66, and Lys-142 each bind 4-CDP-2-C-methyl-D-erythritol 2-phosphate; these read DIG and FPNND.

This sequence belongs to the IspF family. As to quaternary structure, homotrimer. A divalent metal cation is required as a cofactor.

The catalysed reaction is 4-CDP-2-C-methyl-D-erythritol 2-phosphate = 2-C-methyl-D-erythritol 2,4-cyclic diphosphate + CMP. Its pathway is isoprenoid biosynthesis; isopentenyl diphosphate biosynthesis via DXP pathway; isopentenyl diphosphate from 1-deoxy-D-xylulose 5-phosphate: step 4/6. Its function is as follows. Involved in the biosynthesis of isopentenyl diphosphate (IPP) and dimethylallyl diphosphate (DMAPP), two major building blocks of isoprenoid compounds. Catalyzes the conversion of 4-diphosphocytidyl-2-C-methyl-D-erythritol 2-phosphate (CDP-ME2P) to 2-C-methyl-D-erythritol 2,4-cyclodiphosphate (ME-CPP) with a corresponding release of cytidine 5-monophosphate (CMP). This chain is 2-C-methyl-D-erythritol 2,4-cyclodiphosphate synthase, found in Wigglesworthia glossinidia brevipalpis.